A 176-amino-acid polypeptide reads, in one-letter code: Cytochrome b (176 aa).

The next 3 helical transmembrane spans lie at 33 to 53, 77 to 98, and 113 to 133; these read FGSLLGVCLIVQILTGLFLAM, WLLRYLHANGASMFFICLYLHI, and WNVGVILLFAVMATAFMGYVL. Heme b is bound by residues His83 and His97.

This sequence belongs to the cytochrome b family. As to quaternary structure, the cytochrome bc1 complex contains 11 subunits: 3 respiratory subunits (MT-CYB, CYC1 and UQCRFS1), 2 core proteins (UQCRC1 and UQCRC2) and 6 low-molecular weight proteins (UQCRH/QCR6, UQCRB/QCR7, UQCRQ/QCR8, UQCR10/QCR9, UQCR11/QCR10 and a cleavage product of UQCRFS1). This cytochrome bc1 complex then forms a dimer. Heme b serves as cofactor.

The protein resides in the mitochondrion inner membrane. Its function is as follows. Component of the ubiquinol-cytochrome c reductase complex (complex III or cytochrome b-c1 complex) that is part of the mitochondrial respiratory chain. The b-c1 complex mediates electron transfer from ubiquinol to cytochrome c. Contributes to the generation of a proton gradient across the mitochondrial membrane that is then used for ATP synthesis. The protein is Cytochrome b (MT-CYB) of Nyctinomops aurispinosus (Peale's free-tailed bat).